A 191-amino-acid polypeptide reads, in one-letter code: Programmed cell death protein 6 (191 aa).

N-acetylalanine is present on A2. 5 EF-hand domains span residues 23–58 (PDQS…GTWT), 59–89 (PFNP…TGVW), 90–125 (KYIT…FGYR), 126–161 (LSDQ…LQRL), and 162–191 (TDIF…FSIV). Residues D36, D38, S40, V42, and E47 each coordinate Ca(2+). Residues D103, D105, S107, M109, and E114 each coordinate Ca(2+). Mg(2+)-binding residues include D169, D171, D173, and W175.

Homodimer and heterodimer; heterodimerizes (via the EF-hand 5) with PEF1. Isoform 1 and isoform 2 self-associate; probably forming homodimers. Interacts with CPNE4 (via VWFA domain). Interacts with PDCD6IP; the interaction is calcium-dependent. Interacts with RBM22. Interacts with PLSCR4. Interacts with ANXA7 and TSG101. Interacts with DAPK1. Interacts with SEC31A; the interaction is calcium-dependent and promotes monoubiquitination of SEC31A. Interacts with ANXA11 (via N-terminus); the interaction is calcium-dependent. Interacts with PLSCR3 (via N-terminus); the interaction is calcium-dependent. Interacts with MCOLN1; the interaction is calcium-dependent. Interacts with KDR; the interaction is calcium-dependent. Interacts with HEBP2; the interaction is calcium-dependent. Interacts with TFG. Isoform 1: Interacts with SHISA5, leading to stabilize it. Isoform 2: Does not interact with SHISA5. Isoform 2: Does not interact with PDCD6IP, TSG101, ANXA7 and ANXA11.

It is found in the endoplasmic reticulum membrane. The protein localises to the cytoplasmic vesicle. It localises to the COPII-coated vesicle membrane. The protein resides in the cytoplasm. Its subcellular location is the nucleus. It is found in the endosome. Calcium sensor that plays a key role in processes such as endoplasmic reticulum (ER)-Golgi vesicular transport, endosomal biogenesis or membrane repair. Acts as an adapter that bridges unrelated proteins or stabilizes weak protein-protein complexes in response to calcium: calcium-binding triggers exposure of apolar surface, promoting interaction with different sets of proteins thanks to 3 different hydrophobic pockets, leading to translocation to membranes. Involved in ER-Golgi transport by promoting the association between PDCD6IP and TSG101, thereby bridging together the ESCRT-III and ESCRT-I complexes. Together with PEF1, acts as a calcium-dependent adapter for the BCR(KLHL12) complex, a complex involved in ER-Golgi transport by regulating the size of COPII coats. In response to cytosolic calcium increase, the heterodimer formed with PEF1 interacts with, and bridges together the BCR(KLHL12) complex and SEC31 (SEC31A or SEC31B), promoting monoubiquitination of SEC31 and subsequent collagen export, which is required for neural crest specification. Involved in the regulation of the distribution and function of MCOLN1 in the endosomal pathway. Promotes localization and polymerization of TFG at endoplasmic reticulum exit site. Required for T-cell receptor-, Fas-, and glucocorticoid-induced apoptosis. May mediate Ca(2+)-regulated signals along the death pathway: interaction with DAPK1 can accelerate apoptotic cell death by increasing caspase-3 activity. Its role in apoptosis may however be indirect, as suggested by knockout experiments. May inhibit KDR/VEGFR2-dependent angiogenesis; the function involves inhibition of VEGF-induced phosphorylation of the Akt signaling pathway. In case of infection by HIV-1 virus, indirectly inhibits HIV-1 production by affecting viral Gag expression and distribution. Its function is as follows. Has a lower Ca(2+) affinity than isoform 1. This Homo sapiens (Human) protein is Programmed cell death protein 6 (PDCD6).